We begin with the raw amino-acid sequence, 142 residues long: Large ribosomal subunit protein uL11 (142 aa).

This sequence belongs to the universal ribosomal protein uL11 family. As to quaternary structure, part of the ribosomal stalk of the 50S ribosomal subunit. Interacts with L10 and the large rRNA to form the base of the stalk. L10 forms an elongated spine to which L12 dimers bind in a sequential fashion forming a multimeric L10(L12)X complex. Post-translationally, one or more lysine residues are methylated.

Its function is as follows. Forms part of the ribosomal stalk which helps the ribosome interact with GTP-bound translation factors. This Maricaulis maris (strain MCS10) (Caulobacter maris) protein is Large ribosomal subunit protein uL11.